The chain runs to 264 residues: MSEITKITAQKRRGRYNIFIDGTYAFPVSETTLVDYRLAKGMVLTAETVAQIKSSEVTAMGLEIGLTYISHQSRTSKEVSDRLAKEDLPADVIQKVLTRLTDLGFLDDADYAHRYIEEHLKMGELGPRTLQHKLQQKGLKPDLLANELAAIPTTAWLDAAVRAGQKNLRHHQHRAYKDQLQRLRVALMQKGFDDTTIQTAIATIDPQPDPEAESDLLKLEAAKQWRLKAKYDDRERKQKVKTTLFRKGFDVEAIDEVLDDLAES.

The protein belongs to the RecX family.

It is found in the cytoplasm. Functionally, modulates RecA activity. In Lacticaseibacillus casei (strain BL23) (Lactobacillus casei), this protein is Regulatory protein RecX.